The sequence spans 826 residues: DNA mismatch repair protein MutS (826 aa).

622–629 (GPNMAGKS) serves as a coordination point for ATP.

The protein belongs to the DNA mismatch repair MutS family.

Functionally, this protein is involved in the repair of mismatches in DNA. It is possible that it carries out the mismatch recognition step. This protein has a weak ATPase activity. The protein is DNA mismatch repair protein MutS of Chlamydia abortus (strain DSM 27085 / S26/3) (Chlamydophila abortus).